The following is a 396-amino-acid chain: Elongation factor Tu 1 (396 aa).

The tr-type G domain occupies 10–206; it reads KPHVNVGTIG…ALDSYIPLPE (197 aa). Residues 19 to 26 form a G1 region; that stretch reads GHVDHGKT. Residue 19–26 participates in GTP binding; the sequence is GHVDHGKT. Thr26 serves as a coordination point for Mg(2+). Positions 60–64 are G2; sequence GITIN. Positions 81–84 are G3; it reads DCPG. GTP-binding positions include 81–85 and 136–139; these read DCPGH and NKCD. Residues 136 to 139 form a G4 region; that stretch reads NKCD. The tract at residues 174–176 is G5; it reads SAK.

It belongs to the TRAFAC class translation factor GTPase superfamily. Classic translation factor GTPase family. EF-Tu/EF-1A subfamily. Monomer.

The protein resides in the cytoplasm. The catalysed reaction is GTP + H2O = GDP + phosphate + H(+). Its function is as follows. GTP hydrolase that promotes the GTP-dependent binding of aminoacyl-tRNA to the A-site of ribosomes during protein biosynthesis. This is Elongation factor Tu 1 from Albidiferax ferrireducens (strain ATCC BAA-621 / DSM 15236 / T118) (Rhodoferax ferrireducens).